Reading from the N-terminus, the 116-residue chain is Large ribosomal subunit protein uL18 (116 aa).

This sequence belongs to the universal ribosomal protein uL18 family. In terms of assembly, part of the 50S ribosomal subunit; part of the 5S rRNA/L5/L18/L25 subcomplex. Contacts the 5S and 23S rRNAs.

Its function is as follows. This is one of the proteins that bind and probably mediate the attachment of the 5S RNA into the large ribosomal subunit, where it forms part of the central protuberance. In Pseudomonas aeruginosa (strain UCBPP-PA14), this protein is Large ribosomal subunit protein uL18.